Consider the following 303-residue polypeptide: Recombination-associated protein RdgC (303 aa).

It belongs to the RdgC family.

Its subcellular location is the cytoplasm. It is found in the nucleoid. May be involved in recombination. In Edwardsiella ictaluri (strain 93-146), this protein is Recombination-associated protein RdgC.